Consider the following 1902-residue polypeptide: Putative surface cell antigen sca1 (1902 aa).

The first 28 residues, 1 to 28, serve as a signal peptide directing secretion; it reads MNKLTEQHLLKKSRFLKYSLLASISVGA. Disordered stretches follow at residues 140–273, 420–485, 707–729, 858–885, and 1470–1548; these read GIEK…TFVP, QGVF…SRTA, TTTT…YSSS, NRRR…AWGN, and KSES…SDGD. Composition is skewed to polar residues over residues 146–159 and 168–197; these read QSQN…TEQM and TASS…SPEH. Low complexity predominate over residues 199-212; that stretch reads TTAPGTPSSTPATP. A compositionally biased stretch (polar residues) spans 225-238; it reads LGANTPPNINTNSK. The span at 246-264 shows a compositional bias: low complexity; sequence SSSGPQQQAVQSSSQVKSE. The segment covering 423–439 has biased composition (polar residues); the sequence is FNKNKSSGGNARKSSAG. Basic and acidic residues predominate over residues 445–482; the sequence is KKQEAQKQLSEIKKQEKAIKTASDKAKEVAASAKKETS. The span at 863 to 874 shows a compositional bias: basic and acidic residues; that stretch reads RDGETSKQRTVD. Residues 1491–1507 are compositionally biased toward low complexity; it reads LSSLPALASSNESALAL. The span at 1521–1538 shows a compositional bias: acidic residues; it reads SSEDEESYDSGFEEEEET. Positions 1618–1902 constitute an Autotransporter domain; that stretch reads ESHIKRGLWM…QGSVKLKVNL (285 aa).

Its subcellular location is the cell outer membrane. This is Putative surface cell antigen sca1 (sca1) from Rickettsia conorii (strain ATCC VR-613 / Malish 7).